We begin with the raw amino-acid sequence, 36 residues long: Protein YnfP (36 aa).

This Escherichia coli (strain K12) protein is Protein YnfP.